The sequence spans 432 residues: PC-esterase domain-containing protein 1B (432 aa).

Disordered stretches follow at residues 273-312 (WESS…SPGL) and 407-432 (GPYM…SRPQ). A compositionally biased stretch (polar residues) spans 285 to 294 (QDNIGPQFAQ). Pro residues predominate over residues 296–312 (PPYPFPRPPPLLPSPGL).

Belongs to the PC-esterase family.

The chain is PC-esterase domain-containing protein 1B (Pced1b) from Rattus norvegicus (Rat).